The chain runs to 705 residues: Beta-xylosidase (705 aa).

The protein belongs to the glycosyl hydrolase 52 family.

The enzyme catalyses Hydrolysis of (1-&gt;4)-beta-D-xylans, to remove successive D-xylose residues from the non-reducing termini.. It functions in the pathway glycan degradation; xylan degradation. In Geobacillus stearothermophilus (Bacillus stearothermophilus), this protein is Beta-xylosidase (xylA).